The following is a 416-amino-acid chain: Probable glucan 1,3-beta-glucosidase A (416 aa).

An N-terminal signal peptide occupies residues 1–22; the sequence is MIFKFSQKALVALYLVVGLAEA. The Proton donor role is filled by glutamate 211. Cystine bridges form between cysteine 291–cysteine 415 and cysteine 316–cysteine 342. Glutamate 308 serves as the catalytic Nucleophile. A glycan (N-linked (GlcNAc...) asparagine) is linked at asparagine 344.

The protein belongs to the glycosyl hydrolase 5 (cellulase A) family. As to quaternary structure, monomer. Mn(2+) serves as cofactor.

The protein localises to the secreted. The enzyme catalyses Successive hydrolysis of beta-D-glucose units from the non-reducing ends of (1-&gt;3)-beta-D-glucans, releasing alpha-glucose.. Its function is as follows. Beta-glucanases participate in the metabolism of beta-glucan, the main structural component of the cell wall. It could also function biosynthetically as a transglycosylase. The chain is Probable glucan 1,3-beta-glucosidase A (exgA) from Aspergillus fumigatus (strain CBS 144.89 / FGSC A1163 / CEA10) (Neosartorya fumigata).